A 482-amino-acid chain; its full sequence is Transcription termination/antitermination protein NusA (482 aa).

The region spanning 133–197 (NKVVIGYVQQ…NGIEVILSRT (65 aa)) is the S1 motif domain. Positions 300 to 446 (LHKALVVVSD…NDNDESMEKV (147 aa)) constitute a KH domain.

Belongs to the NusA family. Monomer. Binds directly to the core enzyme of the DNA-dependent RNA polymerase and to nascent RNA.

It localises to the cytoplasm. Functionally, participates in both transcription termination and antitermination. In Borreliella burgdorferi (strain ATCC 35210 / DSM 4680 / CIP 102532 / B31) (Borrelia burgdorferi), this protein is Transcription termination/antitermination protein NusA.